The primary structure comprises 398 residues: Tryptophan synthase beta chain (398 aa).

Position 90 is an N6-(pyridoxal phosphate)lysine (K90).

Belongs to the TrpB family. In terms of assembly, tetramer of two alpha and two beta chains. Pyridoxal 5'-phosphate serves as cofactor.

The enzyme catalyses (1S,2R)-1-C-(indol-3-yl)glycerol 3-phosphate + L-serine = D-glyceraldehyde 3-phosphate + L-tryptophan + H2O. Its pathway is amino-acid biosynthesis; L-tryptophan biosynthesis; L-tryptophan from chorismate: step 5/5. Functionally, the beta subunit is responsible for the synthesis of L-tryptophan from indole and L-serine. In Anoxybacillus flavithermus (strain DSM 21510 / WK1), this protein is Tryptophan synthase beta chain.